A 227-amino-acid polypeptide reads, in one-letter code: Phosphoribosylformylglycinamidine synthase subunit PurQ (227 aa).

Positions 3–225 (FAVIVLPGSN…VKNWRETHVA (223 aa)) constitute a Glutamine amidotransferase type-1 domain. Cys-86 functions as the Nucleophile in the catalytic mechanism. Residues His-194 and Glu-196 contribute to the active site.

As to quaternary structure, part of the FGAM synthase complex composed of 1 PurL, 1 PurQ and 2 PurS subunits.

It localises to the cytoplasm. It carries out the reaction N(2)-formyl-N(1)-(5-phospho-beta-D-ribosyl)glycinamide + L-glutamine + ATP + H2O = 2-formamido-N(1)-(5-O-phospho-beta-D-ribosyl)acetamidine + L-glutamate + ADP + phosphate + H(+). The enzyme catalyses L-glutamine + H2O = L-glutamate + NH4(+). It functions in the pathway purine metabolism; IMP biosynthesis via de novo pathway; 5-amino-1-(5-phospho-D-ribosyl)imidazole from N(2)-formyl-N(1)-(5-phospho-D-ribosyl)glycinamide: step 1/2. Its function is as follows. Part of the phosphoribosylformylglycinamidine synthase complex involved in the purines biosynthetic pathway. Catalyzes the ATP-dependent conversion of formylglycinamide ribonucleotide (FGAR) and glutamine to yield formylglycinamidine ribonucleotide (FGAM) and glutamate. The FGAM synthase complex is composed of three subunits. PurQ produces an ammonia molecule by converting glutamine to glutamate. PurL transfers the ammonia molecule to FGAR to form FGAM in an ATP-dependent manner. PurS interacts with PurQ and PurL and is thought to assist in the transfer of the ammonia molecule from PurQ to PurL. In Bacillus licheniformis (strain ATCC 14580 / DSM 13 / JCM 2505 / CCUG 7422 / NBRC 12200 / NCIMB 9375 / NCTC 10341 / NRRL NRS-1264 / Gibson 46), this protein is Phosphoribosylformylglycinamidine synthase subunit PurQ.